Consider the following 128-residue polypeptide: Small ribosomal subunit protein bS6 (128 aa).

It belongs to the bacterial ribosomal protein bS6 family.

Binds together with bS18 to 16S ribosomal RNA. In Acinetobacter baylyi (strain ATCC 33305 / BD413 / ADP1), this protein is Small ribosomal subunit protein bS6.